The primary structure comprises 176 residues: Methylmalonyl-CoA epimerase, mitochondrial (176 aa).

The N-terminal 36 residues, 1-36, are a transit peptide targeting the mitochondrion; the sequence is MARVLKAAAANAVGLFSRLQAPIPTVRASSTSQPLD. The VOC domain occupies 47–176; it reads RLNHVAIAVP…GGVLVELEQA (130 aa). Histidine 50 is a Co(2+) binding site. At lysine 114 the chain carries N6-succinyllysine. Histidine 122 serves as a coordination point for Co(2+). Lysine 150 is modified (N6-acetyllysine; alternate). N6-succinyllysine; alternate is present on lysine 150. Glutamate 172 contributes to the Co(2+) binding site.

The protein belongs to the methylmalonyl-CoA epimerase family.

It is found in the mitochondrion. It carries out the reaction (R)-methylmalonyl-CoA = (S)-methylmalonyl-CoA. Functionally, methylmalonyl-CoA epimerase involved in propionyl-CoA metabolism. In Homo sapiens (Human), this protein is Methylmalonyl-CoA epimerase, mitochondrial.